The following is a 496-amino-acid chain: Lysine--tRNA ligase (496 aa).

2 residues coordinate Mg(2+): E409 and E416.

It belongs to the class-II aminoacyl-tRNA synthetase family. As to quaternary structure, homodimer. Requires Mg(2+) as cofactor.

The protein localises to the cytoplasm. It carries out the reaction tRNA(Lys) + L-lysine + ATP = L-lysyl-tRNA(Lys) + AMP + diphosphate. The polypeptide is Lysine--tRNA ligase (Streptococcus sanguinis (strain SK36)).